The chain runs to 138 residues: Nucleoside diphosphate kinase (138 aa).

6 residues coordinate ATP: Lys-10, Phe-58, Arg-86, Thr-92, Arg-103, and Asn-113. His-116 (pros-phosphohistidine intermediate) is an active-site residue.

The protein belongs to the NDK family. In terms of assembly, homotetramer. The cofactor is Mg(2+).

The protein resides in the cytoplasm. The catalysed reaction is a 2'-deoxyribonucleoside 5'-diphosphate + ATP = a 2'-deoxyribonucleoside 5'-triphosphate + ADP. It carries out the reaction a ribonucleoside 5'-diphosphate + ATP = a ribonucleoside 5'-triphosphate + ADP. In terms of biological role, major role in the synthesis of nucleoside triphosphates other than ATP. The ATP gamma phosphate is transferred to the NDP beta phosphate via a ping-pong mechanism, using a phosphorylated active-site intermediate. This chain is Nucleoside diphosphate kinase, found in Actinobacillus pleuropneumoniae serotype 5b (strain L20).